We begin with the raw amino-acid sequence, 101 residues long: NADH-quinone oxidoreductase subunit K (101 aa).

A run of 3 helical transmembrane segments spans residues Leu4–Leu24, Ile30–Phe50, and Phe62–Val82.

Belongs to the complex I subunit 4L family. NDH-1 is composed of 14 different subunits. Subunits NuoA, H, J, K, L, M, N constitute the membrane sector of the complex.

Its subcellular location is the cell inner membrane. It catalyses the reaction a quinone + NADH + 5 H(+)(in) = a quinol + NAD(+) + 4 H(+)(out). In terms of biological role, NDH-1 shuttles electrons from NADH, via FMN and iron-sulfur (Fe-S) centers, to quinones in the respiratory chain. The immediate electron acceptor for the enzyme in this species is believed to be ubiquinone. Couples the redox reaction to proton translocation (for every two electrons transferred, four hydrogen ions are translocated across the cytoplasmic membrane), and thus conserves the redox energy in a proton gradient. In Xylella fastidiosa (strain Temecula1 / ATCC 700964), this protein is NADH-quinone oxidoreductase subunit K.